The sequence spans 474 residues: 3-isopropylmalate dehydratase large subunit (474 aa).

[4Fe-4S] cluster is bound by residues cysteine 355, cysteine 415, and cysteine 418.

It belongs to the aconitase/IPM isomerase family. LeuC type 1 subfamily. Heterodimer of LeuC and LeuD. It depends on [4Fe-4S] cluster as a cofactor.

It catalyses the reaction (2R,3S)-3-isopropylmalate = (2S)-2-isopropylmalate. Its pathway is amino-acid biosynthesis; L-leucine biosynthesis; L-leucine from 3-methyl-2-oxobutanoate: step 2/4. Functionally, catalyzes the isomerization between 2-isopropylmalate and 3-isopropylmalate, via the formation of 2-isopropylmaleate. The protein is 3-isopropylmalate dehydratase large subunit of Shewanella sp. (strain ANA-3).